A 526-amino-acid chain; its full sequence is Na(+)/H(+) antiporter NhaB (526 aa).

The next 12 helical transmembrane spans lie at 25–45, 52–72, 89–109, 130–164, 204–224, 242–262, 305–325, 350–370, 391–411, 448–468, 479–499, and 505–525; these read ILLFLVINPIAFYLDPFAAGW, IFTLAMALKCYPLQPGGLLAI, LVANIEVLLLLVFMVAGIYFM, LSLAFCLVSAFLSAFLDALTVIAVVISVATGFYAI, LMMHAAIGTALGGVCTLVGEP, IRMAPVTIPVFICGLLTCILV, AVIAIWLILGLAMHLAAVGLI, QEALPFTALLAVFFSVVAVII, LALFYLANGLLSMVSDNVFVG, VATPNGQAAFLFMLTSALAPL, MALPYTLVLGLVGFFSVELLL, and WFYQAGWLLPHSGAPAVLPAL.

It belongs to the NhaB Na(+)/H(+) (TC 2.A.34) antiporter family.

Its subcellular location is the cell inner membrane. It carries out the reaction 2 Na(+)(in) + 3 H(+)(out) = 2 Na(+)(out) + 3 H(+)(in). Na(+)/H(+) antiporter that extrudes sodium in exchange for external protons. The chain is Na(+)/H(+) antiporter NhaB from Aeromonas salmonicida (strain A449).